The sequence spans 281 residues: ATP phosphoribosyltransferase (281 aa).

Belongs to the ATP phosphoribosyltransferase family. Long subfamily. It depends on Mg(2+) as a cofactor.

It localises to the cytoplasm. It catalyses the reaction 1-(5-phospho-beta-D-ribosyl)-ATP + diphosphate = 5-phospho-alpha-D-ribose 1-diphosphate + ATP. The protein operates within amino-acid biosynthesis; L-histidine biosynthesis; L-histidine from 5-phospho-alpha-D-ribose 1-diphosphate: step 1/9. Feedback inhibited by histidine. Functionally, catalyzes the condensation of ATP and 5-phosphoribose 1-diphosphate to form N'-(5'-phosphoribosyl)-ATP (PR-ATP). Has a crucial role in the pathway because the rate of histidine biosynthesis seems to be controlled primarily by regulation of HisG enzymatic activity. The sequence is that of ATP phosphoribosyltransferase (hisG) from Archaeoglobus fulgidus (strain ATCC 49558 / DSM 4304 / JCM 9628 / NBRC 100126 / VC-16).